A 327-amino-acid chain; its full sequence is METIYGSSLKEADAVYACQFDGQGGMTPIDMNGVATPVQPFWQHLDYRNPKSYRWLMDTDLLPETVKAGLAGESLRPKIMRTGDGTMITFRTINNSESERPDQLVVFRIYINSQIVISSRHRKVHSLEQVLSDLQNGIGAKTTGHWLVEMVDAITDEVGNFIEDLHDNLIELENMILEQRIPGRGGLALLRKQLIILRRYMAPQRDVFARLASEKLLWMSDEDRYRMQEISDRLGRELDDLDGCIARTAIISDEITSMMADAMNRRTYTMSLLAMIFLPTTFLTGLFGVNLGGIPGNEYYLGFAIFCLLLFGLVLFVAWWLKKSKWL.

Over Met-1–Ser-271 the chain is Cytoplasmic. Residues Leu-272–Gly-292 form a helical membrane-spanning segment. Topologically, residues Gly-293–Tyr-300 are periplasmic. Residues Leu-301 to Leu-321 traverse the membrane as a helical segment. Residues Lys-322–Leu-327 lie on the Cytoplasmic side of the membrane.

The protein belongs to the CorA metal ion transporter (MIT) (TC 1.A.35) family.

It localises to the cell inner membrane. It catalyses the reaction Zn(2+)(out) + H(+)(out) = Zn(2+)(in) + H(+)(in). Its function is as follows. Zinc transporter. Acts as a Zn(2+):proton symporter, which likely mediates zinc ion uptake. The sequence is that of Zinc transport protein ZntB from Photorhabdus laumondii subsp. laumondii (strain DSM 15139 / CIP 105565 / TT01) (Photorhabdus luminescens subsp. laumondii).